Here is a 505-residue protein sequence, read N- to C-terminus: Cytochrome P450 9b2 (505 aa).

Cys449 contributes to the heme binding site.

Belongs to the cytochrome P450 family. The cofactor is heme.

It is found in the endoplasmic reticulum membrane. The protein resides in the microsome membrane. Its function is as follows. May be involved in the metabolism of insect hormones and in the breakdown of synthetic insecticides. This is Cytochrome P450 9b2 (Cyp9b2) from Drosophila melanogaster (Fruit fly).